A 356-amino-acid polypeptide reads, in one-letter code: tRNA N6-adenosine threonylcarbamoyltransferase (356 aa).

The Fe cation site is built by His-115 and His-119. Substrate is bound by residues 138 to 142 (LVSGG), Asp-171, Gly-184, and Asn-283. Position 311 (Asp-311) interacts with Fe cation.

Belongs to the KAE1 / TsaD family. The cofactor is Fe(2+).

Its subcellular location is the cytoplasm. The catalysed reaction is L-threonylcarbamoyladenylate + adenosine(37) in tRNA = N(6)-L-threonylcarbamoyladenosine(37) in tRNA + AMP + H(+). Its function is as follows. Required for the formation of a threonylcarbamoyl group on adenosine at position 37 (t(6)A37) in tRNAs that read codons beginning with adenine. Is involved in the transfer of the threonylcarbamoyl moiety of threonylcarbamoyl-AMP (TC-AMP) to the N6 group of A37, together with TsaE and TsaB. TsaD likely plays a direct catalytic role in this reaction. The chain is tRNA N6-adenosine threonylcarbamoyltransferase from Prochlorococcus marinus (strain NATL1A).